The sequence spans 352 residues: Threonine synthase (352 aa).

At Lys59 the chain carries N6-(pyridoxal phosphate)lysine. Pyridoxal 5'-phosphate-binding positions include Asn85, Gly185 to Asn189, and Thr314.

Belongs to the threonine synthase family. Pyridoxal 5'-phosphate is required as a cofactor.

It catalyses the reaction O-phospho-L-homoserine + H2O = L-threonine + phosphate. It functions in the pathway amino-acid biosynthesis; L-threonine biosynthesis; L-threonine from L-aspartate: step 5/5. Catalyzes the gamma-elimination of phosphate from L-phosphohomoserine and the beta-addition of water to produce L-threonine. This chain is Threonine synthase (thrC), found in Bacillus subtilis (strain 168).